We begin with the raw amino-acid sequence, 732 residues long: MSRRKISSESFSSLGSDYLETSPEEEGECPLSRLCWNGSRSPPGPLEPSPAAAAAAAAPAPTPAASAAAAAATAGARRVQRRRRVNLDSLGESISRLTAPSPQTIQQTLKRTLQYYEHQVIGYRDAEKNFHNISNRCSYADHSNKEEIEDVSGILQCTANILGLKFEEIQKRFGEEFFNICFHENERVLRAVGGTLQDFFNGFDALLEHIRTSFGKQATLESPSFLCKELPEGTLMLHYFHPHHIVGFAMLGMIKAAGKKIYRLDVEVEQVANEKLCSDVSNPGNCSCLTFLIKECENTNIMKNLPQGTSQVPADLRISINTFCRAFPFHLMFDPSMSVLQLGEGLRKQLRCDTHKVLKFEDCFEIVSPKVNATFERVLLRLSTPFVIRTKPEASGSENKDKVMEVKGQMIHVPESNSILFLGSPCVDKLDELMGRGLHLSDIPIHDATRDVILVGEQAKAQDGLKKRMDKLKATLERTHQALEEEKKKTVDLLYSIFPGDVAQQLWQGQQVQARKFDDVTMLFSDIVGFTAICAQCTPMQVISMLNELYTRFDHQCGFLDIYKVETIGDAYCVAAGLHRKSLCHAKPIALMALKMMELSEEVLTPDGRPIQMRIGIHSGSVLAGVVGVRMPRYCLFGNNVTLASKFESGSHPRRINVSPTTYQLLKREESFTFIPRSREELPDNFPKEIPGICYFLEVRTGPKPPKPSLSSSRIKKVSYNIGTMFLRETSL.

A disordered region spans residues 1–58 (MSRRKISSESFSSLGSDYLETSPEEEGECPLSRLCWNGSRSPPGPLEPSPAAAAAAAA). Residues 49 to 58 (SPAAAAAAAA) show a composition bias toward low complexity. In terms of domain architecture, Guanylate cyclase spans 521–648 (TMLFSDIVGF…NNVTLASKFE (128 aa)).

The protein belongs to the adenylyl cyclase class-4/guanylyl cyclase family. Heterodimer of an alpha and a beta chain. Isoform 1 is expressed in fetal brain, liver, colon, endothelium and testis. Isoform 2 is expressed only in liver, colon and endothelium.

It is found in the cytoplasm. The enzyme catalyses GTP = 3',5'-cyclic GMP + diphosphate. Its activity is regulated as follows. Activated by nitric oxide in the presence of magnesium or manganese ions. Has guanylyl cyclase on binding to the beta-1 subunit. Functionally, isoform 2 acts as a negative regulator of guanylyl cyclase activity as it forms non-functional heterodimers with the beta subunits. The chain is Guanylate cyclase soluble subunit alpha-2 (GUCY1A2) from Homo sapiens (Human).